The following is a 199-amino-acid chain: Chaperone protein TorD (199 aa).

This sequence belongs to the TorD/DmsD family. TorD subfamily.

Its subcellular location is the cytoplasm. Involved in the biogenesis of TorA. Acts on TorA before the insertion of the molybdenum cofactor and, as a result, probably favors a conformation of the apoenzyme that is competent for acquiring the cofactor. The sequence is that of Chaperone protein TorD from Escherichia coli O45:K1 (strain S88 / ExPEC).